The chain runs to 164 residues: Ribosome maturation factor RimP (164 aa).

It belongs to the RimP family.

It is found in the cytoplasm. In terms of biological role, required for maturation of 30S ribosomal subunits. The protein is Ribosome maturation factor RimP of Mycoplasma mycoides subsp. mycoides SC (strain CCUG 32753 / NCTC 10114 / PG1).